Consider the following 222-residue polypeptide: Protein GrpE (222 aa).

The disordered stretch occupies residues 1-82 (MSDFNKDEYL…KADDTLTPLG (82 aa)). The span at 20–71 (SGQAAPAAASADSAAAAAGATQEGAAQPAAAQSQENGDSAAADGADKAGAAD) shows a compositional bias: low complexity.

The protein belongs to the GrpE family. As to quaternary structure, homodimer.

It is found in the cytoplasm. Its function is as follows. Participates actively in the response to hyperosmotic and heat shock by preventing the aggregation of stress-denatured proteins, in association with DnaK and GrpE. It is the nucleotide exchange factor for DnaK and may function as a thermosensor. Unfolded proteins bind initially to DnaJ; upon interaction with the DnaJ-bound protein, DnaK hydrolyzes its bound ATP, resulting in the formation of a stable complex. GrpE releases ADP from DnaK; ATP binding to DnaK triggers the release of the substrate protein, thus completing the reaction cycle. Several rounds of ATP-dependent interactions between DnaJ, DnaK and GrpE are required for fully efficient folding. The polypeptide is Protein GrpE (Bifidobacterium adolescentis (strain ATCC 15703 / DSM 20083 / NCTC 11814 / E194a)).